A 217-amino-acid chain; its full sequence is Ribonuclease HII (217 aa).

An RNase H type-2 domain is found at 26–215; the sequence is EIVCGVDEAG…VREALDLMAG (190 aa). D32, E33, and D124 together coordinate a divalent metal cation.

It belongs to the RNase HII family. Mn(2+) is required as a cofactor. Requires Mg(2+) as cofactor.

The protein localises to the cytoplasm. The enzyme catalyses Endonucleolytic cleavage to 5'-phosphomonoester.. In terms of biological role, endonuclease that specifically degrades the RNA of RNA-DNA hybrids. This is Ribonuclease HII from Burkholderia ambifaria (strain ATCC BAA-244 / DSM 16087 / CCUG 44356 / LMG 19182 / AMMD) (Burkholderia cepacia (strain AMMD)).